A 913-amino-acid polypeptide reads, in one-letter code: Pre-mRNA-processing ATP-dependent RNA helicase PRP5 (913 aa).

Polar residues predominate over residues 1-30; it reads MNSTGSNYSLKHNNTQDNNHNSEESVTNKT. Disordered stretches follow at residues 1–189 and 209–244; these read MNST…SIDT and ENKK…DQKQ. Residues 45–55 are compositionally biased toward basic and acidic residues; that stretch reads SKEEKLKRRQE. The span at 68-82 shows a compositional bias: polar residues; sequence NQEPSGKVTISATDE. Composition is skewed to basic and acidic residues over residues 84-121, 178-188, and 209-219; these read NIDK…KTFE, IEEKKPEKSID, and ENKKIENHDDD. Residues 192–265 adopt a coiled-coil conformation; that stretch reads DELDKYLSLL…QNKQKQLDDV (74 aa). The short motif at 316 to 345 is the Q motif element; that stretch reads IRWSQLGLPSTIMSIIEGRLNYSSPSSIQA. The Helicase ATP-binding domain occupies 348–526; sequence IPAIMSGRDI…KKILDNPMEI (179 aa). 361-368 lines the ATP pocket; that stretch reads AKTGSGKT. Positions 474-477 match the DEAD box motif; it reads DEAD. Residues 564–713 form the Helicase C-terminal domain; the sequence is TLNDYGDKDA…EINPRLIEIS (150 aa). Residues 755–774 form a disordered region; that stretch reads GEENDSSTFKANEKKQNKTD. Over residues 765–774 the composition is skewed to basic and acidic residues; that stretch reads ANEKKQNKTD.

This sequence belongs to the DEAD box helicase family. DDX46/PRP5 subfamily.

Its subcellular location is the nucleus. The enzyme catalyses ATP + H2O = ADP + phosphate + H(+). Its function is as follows. ATP-dependent RNA helicase involved spliceosome assembly and in nuclear splicing. Catalyzes an ATP-dependent conformational change of U2 snRNP. Bridges U1 and U2 snRNPs and enables stable U2 snRNP association with intron RNA. This is Pre-mRNA-processing ATP-dependent RNA helicase PRP5 (PRP5) from Debaryomyces hansenii (strain ATCC 36239 / CBS 767 / BCRC 21394 / JCM 1990 / NBRC 0083 / IGC 2968) (Yeast).